The primary structure comprises 393 residues: Phosphopentomutase (393 aa).

Residues aspartate 15, aspartate 288, histidine 293, aspartate 329, histidine 330, and histidine 341 each coordinate Mn(2+).

It belongs to the phosphopentomutase family. Requires Mn(2+) as cofactor.

The protein localises to the cytoplasm. The catalysed reaction is 2-deoxy-alpha-D-ribose 1-phosphate = 2-deoxy-D-ribose 5-phosphate. It catalyses the reaction alpha-D-ribose 1-phosphate = D-ribose 5-phosphate. It functions in the pathway carbohydrate degradation; 2-deoxy-D-ribose 1-phosphate degradation; D-glyceraldehyde 3-phosphate and acetaldehyde from 2-deoxy-alpha-D-ribose 1-phosphate: step 1/2. In terms of biological role, isomerase that catalyzes the conversion of deoxy-ribose 1-phosphate (dRib-1-P) and ribose 1-phosphate (Rib-1-P) to deoxy-ribose 5-phosphate (dRib-5-P) and ribose 5-phosphate (Rib-5-P), respectively. The chain is Phosphopentomutase from Halalkalibacterium halodurans (strain ATCC BAA-125 / DSM 18197 / FERM 7344 / JCM 9153 / C-125) (Bacillus halodurans).